The chain runs to 543 residues: Organic anion transporter 3 (543 aa).

The Cytoplasmic segment spans residues 1 to 21 (MTFAELVDRVGSKGPFQLLHT). Residues 22-42 (VLLGLPILGMANHNLLQIFTA) form a helical membrane-spanning segment. Residues 43-124 (PTPAHHCRPP…LVCSSSKLKE (82 aa)) lie on the Extracellular side of the membrane. Residue Asn81 is glycosylated (N-linked (GlcNAc...) asparagine). The helical transmembrane segment at 125–145 (MAQSVFMAGILVGGLVLGALS) threads the bilayer. Over 146-151 (DRFGRK) the chain is Cytoplasmic. A helical membrane pass occupies residues 152–172 (PILIFSYLLLGASGSGAAFSP). At 173–181 (TFSIYAVFR) the chain is on the extracellular side. The chain crosses the membrane as a helical span at residues 182 to 202 (FLCGFSISGISLSTAILNVEW). Over 203–212 (VSTRFRAIKS) the chain is Cytoplasmic. Residues 213-233 (IAVGFFYTFGQFILPGLAYAI) traverse the membrane as a helical segment. Topologically, residues 234 to 237 (PQWR) are extracellular. A helical membrane pass occupies residues 238–258 (WLQLTVSVPFLTFFLLSWWLP). The Cytoplasmic segment spans residues 259–328 (ESIRWMVLSG…FRTPVLRRVT (70 aa)). The chain crosses the membrane as a helical span at residues 329-349 (LCLSLAWFATGFAYYSLAMGV). Residues 350-355 (EEFGVN) are Extracellular-facing. Residues 356–376 (LYVLQLIFGGVDVPAKFITML) traverse the membrane as a helical segment. Residues 377-388 (SISYLGRHITEG) lie on the Cytoplasmic side of the membrane. The chain crosses the membrane as a helical span at residues 389 to 409 (IVLLLAGGCILALIFVPLDLM). Over 410 to 412 (TLR) the chain is Extracellular. Residues 413–433 (TVLAVFGKGCLSGSFSCLFLY) form a helical membrane-spanning segment. The Cytoplasmic portion of the chain corresponds to 434–472 (TSELYPTVIRQTGMGASNLWARVGSMTAPLVKITGELQP). Residues 473 to 493 (FIPNIIFGTIALLGGSAALFL) traverse the membrane as a helical segment. The Extracellular portion of the chain corresponds to 494 to 543 (PETLNRPLPETIEDIETWSLRAKEPKPEPEAEKSSQRIPLQPCEPGPGPS). The segment at 513–543 (LRAKEPKPEPEAEKSSQRIPLQPCEPGPGPS) is disordered. Over residues 514-528 (RAKEPKPEPEAEKSS) the composition is skewed to basic and acidic residues.

It belongs to the major facilitator (TC 2.A.1) superfamily. Organic cation transporter (TC 2.A.1.19) family. In terms of tissue distribution, expressed in kidney.

The protein resides in the basolateral cell membrane. It catalyses the reaction estrone 3-sulfate(out) + glutarate(in) = estrone 3-sulfate(in) + glutarate(out). The catalysed reaction is estrone 3-sulfate(in) + 2-oxoglutarate(out) = estrone 3-sulfate(out) + 2-oxoglutarate(in). The enzyme catalyses glutarate(in) + 2-oxoglutarate(out) = glutarate(out) + 2-oxoglutarate(in). It carries out the reaction urate(in) + 2-oxoglutarate(out) = urate(out) + 2-oxoglutarate(in). It catalyses the reaction taurocholate(out) + glutarate(in) = taurocholate(in) + glutarate(out). The catalysed reaction is dehydroepiandrosterone 3-sulfate(out) + glutarate(in) = dehydroepiandrosterone 3-sulfate(in) + glutarate(out). The enzyme catalyses prostaglandin F2alpha(out) + glutarate(in) = prostaglandin F2alpha(in) + glutarate(out). It carries out the reaction prostaglandin F2alpha(out) + 2-oxoglutarate(in) = prostaglandin F2alpha(in) + 2-oxoglutarate(out). It catalyses the reaction (R)-carnitine(out) + 2-oxoglutarate(in) = (R)-carnitine(in) + 2-oxoglutarate(out). The catalysed reaction is glutarate(in) + (R)-carnitine(out) = glutarate(out) + (R)-carnitine(in). The enzyme catalyses prostaglandin E2(out) + 2-oxoglutarate(in) = prostaglandin E2(in) + 2-oxoglutarate(out). It carries out the reaction prostaglandin E2(out) + glutarate(in) = prostaglandin E2(in) + glutarate(out). It catalyses the reaction urate(in) + glutarate(out) = urate(out) + glutarate(in). The catalysed reaction is taurocholate(out) + 2-oxoglutarate(in) = taurocholate(in) + 2-oxoglutarate(out). The enzyme catalyses dehydroepiandrosterone 3-sulfate(out) + 2-oxoglutarate(in) = dehydroepiandrosterone 3-sulfate(in) + 2-oxoglutarate(out). It carries out the reaction kynurenate(out) + a dicarboxylate(in) = kynurenate(in) + a dicarboxylate(out). It catalyses the reaction (indol-3-yl)acetate(out) + a dicarboxylate(in) = (indol-3-yl)acetate(in) + a dicarboxylate(out). The catalysed reaction is indoxyl sulfate(out) + a dicarboxylate(in) = indoxyl sulfate(in) + a dicarboxylate(out). The enzyme catalyses N-benzoylglycine(out) + a dicarboxylate(in) = N-benzoylglycine(in) + a dicarboxylate(out). It carries out the reaction 3-carboxy-4-methyl-5-propyl-2-furanpropanoate(out) + a dicarboxylate(in) = 3-carboxy-4-methyl-5-propyl-2-furanpropanoate(in) + a dicarboxylate(out). It catalyses the reaction (6R)-L-erythro-5,6,7,8-tetrahydrobiopterin(out) + a dicarboxylate(in) = (6R)-L-erythro-5,6,7,8-tetrahydrobiopterin(in) + a dicarboxylate(out). The catalysed reaction is L-erythro-7,8-dihydrobiopterin(out) + a dicarboxylate(in) = L-erythro-7,8-dihydrobiopterin(in) + a dicarboxylate(out). The enzyme catalyses L-sepiapterin(out) + a dicarboxylate(in) = L-sepiapterin(in) + a dicarboxylate(out). In terms of biological role, functions as an organic anion/dicarboxylate exchanger that couples organic anion uptake indirectly to the sodium gradient. Transports organic anions such as estrone 3-sulfate (E1S) and urate in exchange for dicarboxylates such as glutarate or ketoglutarate (2-oxoglutarate). Plays an important role in the excretion of endogenous and exogenous organic anions, especially from the kidney and the brain. E1S transport is pH- and chloride-dependent and may also involve E1S/cGMP exchange. Responsible for the transport of prostaglandin E2 (PGE2) and prostaglandin F2(alpha) (PGF2(alpha)) in the basolateral side of the renal tubule. Involved in the transport of neuroactive tryptophan metabolites kynurenate and xanthurenate. Functions as a biopterin transporters involved in the uptake and the secretion of coenzymes tetrahydrobiopterin (BH4), dihydrobiopterin (BH2) and sepiapterin to urine, thereby determining baseline levels of blood biopterins. May be involved in the basolateral transport of steviol, a metabolite of the popular sugar substitute stevioside. May participate in the detoxification/ renal excretion of drugs and xenobiotics, such as the histamine H(2)-receptor antagonists fexofenadine and cimetidine, the antibiotic benzylpenicillin (PCG), the anionic herbicide 2,4-dichloro-phenoxyacetate (2,4-D), the diagnostic agent p-aminohippurate (PAH), the antiviral acyclovir (ACV), and the mycotoxin ochratoxin (OTA), by transporting these exogenous organic anions across the cell membrane in exchange for dicarboxylates such as 2-oxoglutarate. Contributes to the renal uptake of potent uremic toxins (indoxyl sulfate (IS), indole acetate (IA), hippurate/N-benzoylglycine (HA) and 3-carboxy-4-methyl-5-propyl-2-furanpropionate (CMPF)), pravastatin, PCG, E1S and dehydroepiandrosterone sulfate (DHEAS), and is partly involved in the renal uptake of temocaprilat (an angiotensin-converting enzyme (ACE) inhibitor). May contribute to the release of cortisol in the adrenals. Involved in one of the detoxification systems on the choroid plexus (CP), removes substrates such as E1S or taurocholate (TC), PCG, 2,4-D and PAH, from the cerebrospinal fluid (CSF) to the blood for eventual excretion in urine and bile. Also contributes to the uptake of several other organic compounds such as the prostanoids prostaglandin E(2) and prostaglandin F(2-alpha), L-carnitine, and the therapeutic drugs allopurinol, 6-mercaptopurine (6-MP) and 5-fluorouracil (5-FU). Mediates the transport of PAH, PCG, and the statins pravastatin and pitavastatin, from the cerebrum into the blood circulation across the blood-brain barrier (BBB). In summary, plays a role in the efflux of drugs and xenobiotics, helping reduce their undesired toxicological effects on the body. This chain is Organic anion transporter 3 (SLC22A8), found in Sus scrofa (Pig).